A 279-amino-acid chain; its full sequence is Small ribosomal subunit protein uS2 (279 aa).

The interval 232 to 279 is disordered; sequence RRRGTDEKPEAGVASDEPLAEWERELLEEPKKSDEPKSDEQPAAAAAE. Basic and acidic residues predominate over residues 252–271; the sequence is EWERELLEEPKKSDEPKSDE.

Belongs to the universal ribosomal protein uS2 family.

The polypeptide is Small ribosomal subunit protein uS2 (Salinispora arenicola (strain CNS-205)).